A 406-amino-acid polypeptide reads, in one-letter code: UPF0754 membrane protein SYNPCC7002_A1087 (406 aa).

A helical transmembrane segment spans residues 384 to 404 (IVNLGGVLGFLVGVAQSVILL).

This sequence belongs to the UPF0754 family.

It localises to the cell inner membrane. The protein is UPF0754 membrane protein SYNPCC7002_A1087 of Picosynechococcus sp. (strain ATCC 27264 / PCC 7002 / PR-6) (Agmenellum quadruplicatum).